Here is a 235-residue protein sequence, read N- to C-terminus: tRNA pseudouridine synthase B (235 aa).

Asp-45 acts as the Nucleophile in catalysis.

The protein belongs to the pseudouridine synthase TruB family. Type 1 subfamily.

The enzyme catalyses uridine(55) in tRNA = pseudouridine(55) in tRNA. In terms of biological role, responsible for synthesis of pseudouridine from uracil-55 in the psi GC loop of transfer RNAs. The polypeptide is tRNA pseudouridine synthase B (Chlamydia abortus (strain DSM 27085 / S26/3) (Chlamydophila abortus)).